The primary structure comprises 146 residues: D-aminoacyl-tRNA deacylase (146 aa).

The Gly-cisPro motif, important for rejection of L-amino acids motif lies at 137–138; it reads GP.

The protein belongs to the DTD family. Homodimer.

Its subcellular location is the cytoplasm. It carries out the reaction glycyl-tRNA(Ala) + H2O = tRNA(Ala) + glycine + H(+). It catalyses the reaction a D-aminoacyl-tRNA + H2O = a tRNA + a D-alpha-amino acid + H(+). In terms of biological role, an aminoacyl-tRNA editing enzyme that deacylates mischarged D-aminoacyl-tRNAs. Also deacylates mischarged glycyl-tRNA(Ala), protecting cells against glycine mischarging by AlaRS. Acts via tRNA-based rather than protein-based catalysis; rejects L-amino acids rather than detecting D-amino acids in the active site. By recycling D-aminoacyl-tRNA to D-amino acids and free tRNA molecules, this enzyme counteracts the toxicity associated with the formation of D-aminoacyl-tRNA entities in vivo and helps enforce protein L-homochirality. The sequence is that of D-aminoacyl-tRNA deacylase from Anoxybacillus flavithermus (strain DSM 21510 / WK1).